A 275-amino-acid polypeptide reads, in one-letter code: Large ribosomal subunit protein uL2 (275 aa).

2 disordered regions span residues 1-55 (MGIR…RHRG) and 218-275 (PHVR…RRRR). The segment covering 259-275 (TRNKKKASSRLIVRRRR) has biased composition (basic residues).

It belongs to the universal ribosomal protein uL2 family. As to quaternary structure, part of the 50S ribosomal subunit. Forms a bridge to the 30S subunit in the 70S ribosome.

One of the primary rRNA binding proteins. Required for association of the 30S and 50S subunits to form the 70S ribosome, for tRNA binding and peptide bond formation. It has been suggested to have peptidyltransferase activity; this is somewhat controversial. Makes several contacts with the 16S rRNA in the 70S ribosome. The chain is Large ribosomal subunit protein uL2 from Crocosphaera subtropica (strain ATCC 51142 / BH68) (Cyanothece sp. (strain ATCC 51142)).